Here is a 182-residue protein sequence, read N- to C-terminus: MFTGVQNYTQEVIKAAKYIGQGFTITLDHMNRLPVTIQYPYEKLIPSERFRGRIHFEFDKCIACEVCVRVCPINLPVVDWEFQKSIKKKQLKSYSIDFGVCIFCGNCVEYCPTNCLSMTEEYELSVYDRHELNYDHIALGRLPISSIKDPMVYGVNGLSYLEKNIIQDNTNKDTVTGPYNKE.

4Fe-4S ferredoxin-type domains are found at residues 52-81 (GRIH…VDWE) and 92-121 (KSYS…MTEE). [4Fe-4S] cluster is bound by residues Cys61, Cys64, Cys67, Cys71, Cys101, Cys104, Cys107, and Cys111.

This sequence belongs to the complex I 23 kDa subunit family. NDH is composed of at least 16 different subunits, 5 of which are encoded in the nucleus. It depends on [4Fe-4S] cluster as a cofactor.

The protein resides in the plastid. Its subcellular location is the chloroplast thylakoid membrane. It catalyses the reaction a plastoquinone + NADH + (n+1) H(+)(in) = a plastoquinol + NAD(+) + n H(+)(out). The catalysed reaction is a plastoquinone + NADPH + (n+1) H(+)(in) = a plastoquinol + NADP(+) + n H(+)(out). Functionally, NDH shuttles electrons from NAD(P)H:plastoquinone, via FMN and iron-sulfur (Fe-S) centers, to quinones in the photosynthetic chain and possibly in a chloroplast respiratory chain. The immediate electron acceptor for the enzyme in this species is believed to be plastoquinone. Couples the redox reaction to proton translocation, and thus conserves the redox energy in a proton gradient. This chain is NAD(P)H-quinone oxidoreductase subunit I, chloroplastic, found in Chaetosphaeridium globosum (Charophycean green alga).